Consider the following 491-residue polypeptide: Trigger factor (491 aa).

The region spanning 173–260 is the PPIase FKBP-type domain; sequence GDVAVVSFSG…LDELKGRELP (88 aa). The tract at residues 435–491 is disordered; it reads MVDPASEDKPAKASKAKSSKAKAEKEPAAEGQAKAKPAAKTSKSKTKAAEKLITPID. A compositionally biased stretch (low complexity) spans 463–475; that stretch reads AEGQAKAKPAAKT.

Belongs to the FKBP-type PPIase family. Tig subfamily.

The protein resides in the cytoplasm. The catalysed reaction is [protein]-peptidylproline (omega=180) = [protein]-peptidylproline (omega=0). In terms of biological role, involved in protein export. Acts as a chaperone by maintaining the newly synthesized protein in an open conformation. Functions as a peptidyl-prolyl cis-trans isomerase. The polypeptide is Trigger factor (Synechococcus sp. (strain RCC307)).